The following is a 525-amino-acid chain: uncharacterized protein (525 aa).

6 helical membrane passes run 7–29 (FLAT…LGQI), 34–51 (LRFG…VGAL), 64–82 (GLGV…GSTF), 92–114 (LMLA…GRLF), 121–143 (VAGL…ATHG), and 148–170 (LVGY…AIIA). RCK C-terminal domains are found at residues 178–257 (KDNT…LGHV) and 259–341 (ERTL…LFGD). 5 consecutive transmembrane segments (helical) span residues 351 to 370 (ALSL…LMVA), 374 to 396 (GLQF…GSIH), 416 to 438 (LGLM…SQAV), 443 to 465 (LAVI…AAAW), and 502 to 524 (SAYG…VIVL).

Belongs to the AAE transporter (TC 2.A.81) family.

The protein localises to the cell membrane. This is an uncharacterized protein from Cutibacterium acnes (strain DSM 16379 / KPA171202) (Propionibacterium acnes).